We begin with the raw amino-acid sequence, 451 residues long: Trigger factor (451 aa).

The PPIase FKBP-type domain maps to 163 to 248 (GDIIDMEYTV…IKALYANILP (86 aa)).

This sequence belongs to the FKBP-type PPIase family. Tig subfamily.

It is found in the cytoplasm. The enzyme catalyses [protein]-peptidylproline (omega=180) = [protein]-peptidylproline (omega=0). In terms of biological role, involved in protein export. Acts as a chaperone by maintaining the newly synthesized protein in an open conformation. Functions as a peptidyl-prolyl cis-trans isomerase. The sequence is that of Trigger factor from Leptospira interrogans serogroup Icterohaemorrhagiae serovar copenhageni (strain Fiocruz L1-130).